Reading from the N-terminus, the 169-residue chain is Peptide methionine sulfoxide reductase MsrA (169 aa).

The active site involves C10.

It belongs to the MsrA Met sulfoxide reductase family.

It catalyses the reaction L-methionyl-[protein] + [thioredoxin]-disulfide + H2O = L-methionyl-(S)-S-oxide-[protein] + [thioredoxin]-dithiol. The catalysed reaction is [thioredoxin]-disulfide + L-methionine + H2O = L-methionine (S)-S-oxide + [thioredoxin]-dithiol. Has an important function as a repair enzyme for proteins that have been inactivated by oxidation. Catalyzes the reversible oxidation-reduction of methionine sulfoxide in proteins to methionine. This chain is Peptide methionine sulfoxide reductase MsrA, found in Streptococcus pyogenes serotype M6 (strain ATCC BAA-946 / MGAS10394).